Here is a 593-residue protein sequence, read N- to C-terminus: Epidermal growth factor receptor kinase substrate 8-like protein 3 (593 aa).

The 128-residue stretch at Gln-28–Pro-155 folds into the PTB domain. Disordered regions lie at residues Glu-149–Ala-171, Leu-184–Glu-239, and Ala-374–Pro-451. A Phosphoserine modification is found at Ser-231. A compositionally biased stretch (polar residues) spans Pro-386–Ala-401. A compositionally biased stretch (basic and acidic residues) spans Pro-425–Gln-435. The 60-residue stretch at Gln-450–Pro-509 folds into the SH3 domain.

The protein belongs to the EPS8 family. As to quaternary structure, interacts with ABI1. Part of a complex that contains SOS1, ABI1 and EPS8L2. Interacts with FASLG.

It is found in the cytoplasm. In Homo sapiens (Human), this protein is Epidermal growth factor receptor kinase substrate 8-like protein 3 (EPS8L3).